The following is a 699-amino-acid chain: eEF1A lysine and N-terminal methyltransferase (699 aa).

M1 is modified (N-acetylmethionine). A Phosphoserine modification is found at S267. The segment at 433–460 is disordered; sequence VSHRAQKKRKKDRKKHRPADTPEDLPAA. Residues 436–449 are compositionally biased toward basic residues; the sequence is RAQKKRKKDRKKHR.

Belongs to the methyltransferase superfamily. In terms of assembly, forms a tripartite complex containing GAB1, METTL13 and SPRY2. Within the complex interacts with GAB1 and SPRY2.

It localises to the cytoplasm. The protein resides in the nucleus. It is found in the mitochondrion. It carries out the reaction L-lysyl-[protein] + S-adenosyl-L-methionine = N(6)-methyl-L-lysyl-[protein] + S-adenosyl-L-homocysteine + H(+). It catalyses the reaction N(6)-methyl-L-lysyl-[protein] + S-adenosyl-L-methionine = N(6),N(6)-dimethyl-L-lysyl-[protein] + S-adenosyl-L-homocysteine + H(+). The catalysed reaction is N-terminal glycyl-L-lysyl-L-glutamyl-[protein] + 3 S-adenosyl-L-methionine = N-terminal N,N,N-trimethyl-glycyl-L-lysyl-L-glutamyl-[protein] + 3 S-adenosyl-L-homocysteine + 3 H(+). Dual methyltransferase that catalyzes methylation of elongation factor 1-alpha (EEF1A1 and EEF1A2) at two different positions, and is therefore involved in the regulation of mRNA translation. Via its C-terminus, methylates EEF1A1 and EEF1A2 at the N-terminal residue 'Gly-2'. Via its N-terminus dimethylates EEF1A1 and EEF1A2 at residue 'Lys-55'. Has no activity towards core histones H2A, H2B, H3 and H4. In Bos taurus (Bovine), this protein is eEF1A lysine and N-terminal methyltransferase (METTL13).